We begin with the raw amino-acid sequence, 1515 residues long: DNA topoisomerase 2-binding protein 1 (1515 aa).

BRCT domains follow at residues Val-101–Asp-189 and Phe-195–Ala-284. At Thr-298 the chain carries Phosphothreonine. BRCT domains follow at residues Ala-353–His-443, Arg-551–Leu-636, and Ser-644–Val-741. Residues Val-759–Leu-893 are interaction with CIP2A. Thr-782 is subject to Phosphothreonine. The interval Ser-799–Pro-826 is disordered. Thr-851 carries the phosphothreonine modification. Ser-862, Ser-863, Ser-866, Ser-888, and Ser-890 each carry phosphoserine. Residues Ser-880–Pro-891 are compositionally biased toward polar residues. The tract at residues Ser-880–Glu-901 is disordered. The 92-residue stretch at Glu-902 to His-993 folds into the BRCT 6 domain. The disordered stretch occupies residues Val-1020 to Gly-1055. Basic and acidic residues predominate over residues Ser-1023–Ser-1032. Thr-1064 carries the post-translational modification Phosphothreonine. Residues Ser-1097–Ser-1116 are compositionally biased toward low complexity. Disordered stretches follow at residues Ser-1097–Ser-1119, Val-1203–Glu-1255, and Lys-1491–His-1515. The segment covering Pro-1217–Gln-1229 has biased composition (pro residues). A BRCT 7 domain is found at Glu-1255 to Trp-1347. Residues Lys-1510 to Arg-1513 carry the Nuclear localization signal motif.

The protein belongs to the TOPBP1 family. As to quaternary structure, interacts (via BRCT domains 1 and 2) with (phosphorylated) MDC1; promoting TOPBP1 recruitment to DNA damage sites during mitosis. Interacts (via BRCT domains 7 and 8) with (autophosphorylated) ATR; promoting activation of ATR. Interacts (via BRCT domains 7 and 8) with (phosphorylated) POLQ; specifically binds POLQ phosphorylated by PLK1, promoting POLQ recruitment to DNA damage sites. Interacts (via BRCT domains 1 and 2) with (phosphorylated) RAD9A. Interacts (via BRCT domain 2) with (phosphorylated) TP53BP1. Interacts (via BRCT domain 2) with (phosphorylated) HTATSF1. Interacts (via BRCT domains 7 and 8) with (phosphorylated) RAD51; promoting RAD51 recruitment to damaged chromatin. Interacts with CIP2A; forming the CIP2A-TOPBP1 complex. Interacts with POLE. Interacts with UBR5. Interacts with E2F1. Interacts with PML. Interacts with SMARCA2. Interacts with SMARCA4. Interacts with RHNO1. May interact with TOP2B. Interacts with TICRR. Interacts with HELB. In terms of processing, phosphorylated on serine and threonine residues in response to X-ray irradiation. Ubiquitinated and degraded by the proteasome. X-ray irradiation reduces ubiquitination. Deubiquitinated by USP13; leading to TOPBP1 stabilizion and activation of the ATR-TOPBP1 axis pathway. Highly expressed in testis.

The protein localises to the nucleus. It is found in the chromosome. Its subcellular location is the cytoplasm. The protein resides in the cytoskeleton. It localises to the microtubule organizing center. The protein localises to the centrosome. It is found in the spindle pole. Functionally, scaffold protein that acts as a key protein-protein adapter in DNA replication and DNA repair. Composed of multiple BRCT domains, which specifically recognize and bind phosphorylated proteins, bringing proteins together into functional combinations. Required for DNA replication initiation but not for the formation of pre-replicative complexes or the elongation stages. Necessary for the loading of replication factors onto chromatin, including GMNC, CDC45, DNA polymerases and components of the GINS complex. Plays a central role in DNA repair by bridging proteins and promoting recruitment of proteins to DNA damage sites. Involved in double-strand break (DSB) repair via homologous recombination in S-phase by promoting the exchange between the DNA replication factor A (RPA) complex and RAD51. Mechanistically, TOPBP1 is recruited to DNA damage sites in S-phase via interaction with phosphorylated HTATSF1, and promotes the loading of RAD51, thereby facilitating RAD51 nucleofilaments formation and RPA displacement, followed by homologous recombination. Involved in microhomology-mediated end-joining (MMEJ) DNA repair by promoting recruitment of polymerase theta (POLQ) to DNA damage sites during mitosis. MMEJ is an alternative non-homologous end-joining (NHEJ) machinery that takes place during mitosis to repair DSBs in DNA that originate in S-phase. Recognizes and binds POLQ phosphorylated by PLK1, enabling its recruitment to DSBs for subsequent repair. Involved in G1 DNA damage checkpoint by acting as a molecular adapter that couples TP53BP1 and the 9-1-1 complex. In response to DNA damage, triggers the recruitment of checkpoint signaling proteins on chromatin, which activate the CHEK1 signaling pathway and block S-phase progression. Acts as an activator of the kinase activity of ATR. Also required for chromosomal stability when DSBs occur during mitosis by forming filamentous assemblies that bridge MDC1 and tether broken chromosomes during mitosis. Together with CIP2A, plays an essential role in the response to genome instability generated by the presence of acentric chromosome fragments derived from shattered chromosomes within micronuclei. Micronuclei, which are frequently found in cancer cells, consist of chromatin surrounded by their own nuclear membrane: following breakdown of the micronuclear envelope, a process associated with chromothripsis, the CIP2A-TOPBP1 complex tethers chromosome fragments during mitosis to ensure clustered segregation of the fragments to a single daughter cell nucleus, facilitating re-ligation with limited chromosome scattering and loss. Recruits the SWI/SNF chromatin remodeling complex to E2F1-responsive promoters, thereby down-regulating E2F1 activity and inhibiting E2F1-dependent apoptosis during G1/S transition and after DNA damage. This is DNA topoisomerase 2-binding protein 1 from Mus musculus (Mouse).